The sequence spans 124 residues: Large ribosomal subunit protein bL12 (124 aa).

It belongs to the bacterial ribosomal protein bL12 family. Homodimer. Part of the ribosomal stalk of the 50S ribosomal subunit. Forms a multimeric L10(L12)X complex, where L10 forms an elongated spine to which 2 to 4 L12 dimers bind in a sequential fashion. Binds GTP-bound translation factors.

In terms of biological role, forms part of the ribosomal stalk which helps the ribosome interact with GTP-bound translation factors. Is thus essential for accurate translation. The polypeptide is Large ribosomal subunit protein bL12 (Hamiltonella defensa subsp. Acyrthosiphon pisum (strain 5AT)).